The sequence spans 918 residues: MSLVSQNSRRRRGGRANARRNNGKGHPAAVPGPDVPRDRNDPKILQGLRASEGPGTSMLPTPREGPSASVPPTASEGSSAPRQFIISQGPNTSEMPTSRKGRGASRPPAVSAGLNTAMSITASEGPNSPVPPTAPKGSKAYEHLPVSEGLAISEQRHSDGGPNMEPTLGEGPGISVPPTFSEESGISDEGLSIFMSPNISEGPGINEPYSVSEDPSTSVPPTDSNGLGINLPPTFGEGLSISMLFSALEEPDIFAPPPSAEGLFASMSPPSGEIQSSWVSPIIMEGCNVNVPPTSKKGLRTSVPSAACESPSTSAEGLSSSLSSISAEGFCSSLAPCAAEGSCELLPCGEGRSTSELHCLGEGSSTSQMSLAAEGPSASGMPTEANNPEEALSCCASERRNKSTSRALQKAKDPSVRPKREDRFLDFQVLRDSKNSNSITIMGLGTSRVALTLKPQDPMEQNVAELLQFLLLKDQTKYPIKESDMREFIDKDYRHQFPEILRRAAVHLECIFRFELKELDTEEHIYILLNKLGPVPFEGLEDVPNGPKMGLLMMILGHILLNGNQAREADIWEMLWRFGVQRERRLSVFGNVKRLLSVEFVWQRYLDYRPLTDCVPVEYEFYWGPRSRAETTKMKILKFMAKIYNKDPMDWPALYNEALEEDADRVVVNNFRVARPFRRPLFAEVAPELDASGSKYSPHSWPESRLESKARKLVQLFLLMDSTKLPIPKKGILYYIGRECTKVFPDLLNRAARTLNHVYGTELVVLDPRNHSYTLYNRREMEDTEEIMDSPNRPGNNFLMQVLSFIFIMGNHARESAVWAFLRGLGVQNGRKHVITCRYLSQRYLDSLRVPDSDPVQYDFVWGPRARLETSKMKALRYVARIHRKEPEDWPEQYREAMEDEANRAEAGRRPLIVRNLR.

3 disordered regions span residues 1–140 (MSLV…GSKA), 154–227 (EQRH…SNGL), and 367–388 (SQMS…ANNP). A compositionally biased stretch (basic residues) spans 8 to 23 (SRRRRGGRANARRNNG). Polar residues-rich tracts occupy residues 70-96 (VPPT…SEMP), 113-126 (GLNT…SEGP), and 213-227 (EDPS…SNGL). MAGE domains are found at residues 459-658 (MEQN…YNEA) and 706-897 (LESK…YREA). Residues 704-918 (SRLESKARKL…RRPLIVRNLR (215 aa)) are interaction with DTNA.

As to quaternary structure, interacts with DTNA. Interacts with TRIM28. In terms of tissue distribution, expressed in cell bodies and dendrites of hippocampal and Purkinje neurons. Also expressed in peripheral nerve, where it localizes to the perineurium and myelin (at protein level). Predominantly expressed in brain and at low levels in the heart, liver, kidney, spleen, testis, lung, thymus, placenta and skeletal muscle.

The protein resides in the cytoplasm. Its subcellular location is the perinuclear region. The protein localises to the nucleus. It localises to the cell membrane. Its function is as follows. May enhance ubiquitin ligase activity of RING-type zinc finger-containing E3 ubiquitin-protein ligases. Proposed to act through recruitment and/or stabilization of the Ubl-conjugating enzyme (E2) at the E3:substrate complex. The chain is Melanoma-associated antigen E1 (Magee1) from Mus musculus (Mouse).